The primary structure comprises 104 residues: MAGKAHRLSAEERDQLLPNLRAVGWNEVEGRDAIFKQFHFKDFNRAFGFMTRVALQAEKLDHHPEWFNVYNKVHITLSTHECAGLSERDINLASFIEQVAVSMT.

The residue at position 2 (alanine 2) is an N-acetylalanine. Residues 61–63 (DHH) and 78–81 (STHE) each bind substrate.

It belongs to the pterin-4-alpha-carbinolamine dehydratase family. Homotetramer and homodimer. Heterotetramer with HNF1A; formed by a dimer of dimers. Interacts with HNF1B (via HNF-p1 domain); the interaction increases HNF1B transactivation activity. Mainly expressed in the liver, in pancreatic cells, and in the kidney, especially in the distal convoluted tubule, in the cortical thick ascending limb of Henle's loop and in the connecting tubule.

The protein localises to the cytoplasm. It is found in the nucleus. It carries out the reaction (4aS,6R)-4a-hydroxy-L-erythro-5,6,7,8-tetrahydrobiopterin = (6R)-L-erythro-6,7-dihydrobiopterin + H2O. Its function is as follows. Involved in tetrahydrobiopterin biosynthesis. Seems to both prevent the formation of 7-pterins and accelerate the formation of quinonoid-BH2. Coactivator for HNF1A-dependent transcription. Regulates the dimerization of homeodomain protein HNF1A and enhances its transcriptional activity. Also acts as a coactivator for HNF1B-dependent transcription. This is Pterin-4-alpha-carbinolamine dehydratase (Pcbd1) from Mus musculus (Mouse).